The sequence spans 444 residues: sn-glycerol-3-phosphate-binding periplasmic protein UgpB (444 aa).

The N-terminal stretch at 1-30 (MFNNTIRKTHAIRTAAACVAFALMSAGAQA) is a signal peptide. 7 residues coordinate sn-glycerol 3-phosphate: tyrosine 72, glutamate 96, serine 151, serine 277, glycine 314, tyrosine 353, and arginine 404.

This sequence belongs to the bacterial solute-binding protein 1 family. The complex is composed of two ATP-binding proteins (UgpC), two transmembrane proteins (UgpA and UgpE) and a solute-binding protein (UgpB).

The protein resides in the periplasm. Functionally, part of the ABC transporter complex UgpBAEC involved in sn-glycerol-3-phosphate (G3P) import. Binds G3P. The chain is sn-glycerol-3-phosphate-binding periplasmic protein UgpB (ugpB) from Pectobacterium atrosepticum (strain SCRI 1043 / ATCC BAA-672) (Erwinia carotovora subsp. atroseptica).